The following is a 1802-amino-acid chain: Signaling mucin HKR1 (1802 aa).

An N-terminal signal peptide occupies residues 1–21 (MVSLKIKKILLLVSLLNAIEA). The Extracellular segment spans residues 22 to 1485 (YSNDTIYSTS…SASAGKYAVK (1464 aa)). An N-linked (GlcNAc...) asparagine glycan is attached at asparagine 24. 2 disordered regions span residues 47–176 (ISST…PREI) and 261–311 (YSSS…VSRP). Over residues 54–81 (NKENAITSSSETTTMAGQYGESGSTTIM) the composition is skewed to polar residues. Residues 88 to 107 (TSSQYISVTTTTQTSDTMSS) are compositionally biased toward low complexity. Polar residues predominate over residues 113 to 143 (EIATPSSSIVPTPLQSYSDESQISQTLSHNP). Composition is skewed to low complexity over residues 145-172 (SVAE…SSAV) and 261-302 (YSSS…SESS). A 1; approximate repeat occupies 453-480 (SVPVAVSSTYTSSPSASVVVPSAYASSP). The segment at 453 to 788 (SVPVAVSSTY…VLSSTSTSSP (336 aa)) is 12 X 28 AA tandem repeats of S-[AV]-[P]-V-A-V-S-S-T-Y-T-S-S-P-S-A-P-A-A-I-S-S-T-Y-T-S-S-P. 11 consecutive repeat copies span residues 481–508 (SVPV…TSSP), 509–536 (SAPV…TSSP), 537–564 (SAPV…TSSP), 565–592 (SAPV…TSSP), 593–620 (SVPV…TSSP), 621–648 (SAPV…TSSP), 649–676 (SVPV…TSSP), 677–704 (SVPV…TSSP), 705–732 (SAPV…TSSP), 733–760 (SAPV…TSSP), and 761–788 (SAPV…TSSP). 2 disordered regions span residues 961–984 (SLQS…TETS) and 1067–1165 (ETIP…SYSR). Polar residues-rich tracts occupy residues 970–984 (TKNP…TETS) and 1071–1123 (ASKS…TNTK). The span at 1136–1165 (TMGENGEETGLTTTKTQYKSSSETSGSYSR) shows a compositional bias: low complexity. N-linked (GlcNAc...) asparagine glycosylation is found at asparagine 1252, asparagine 1293, asparagine 1342, and asparagine 1400. A helical transmembrane segment spans residues 1486-1506 (IIIFLIVLTIGVLLWLFVAFF). Over 1507-1802 (AFRHRNILLK…KQQNHQTTKI (296 aa)) the chain is Cytoplasmic. A disordered region spans residues 1534–1559 (ESTELSRSSSGNQVYNEKPPESENES).

Belongs to the HKR1/MSB2 family. Could be O-glycosylated in the serine/threonine-rich domain.

The protein localises to the cell membrane. In terms of biological role, plasma membrane signaling mucin that promotes activation of the MAPK for the filamentous growth pathway. May regulate beta-glucan synthesis. Overexpression provides resistance to HM-1 killer toxin. This chain is Signaling mucin HKR1 (HKR1), found in Saccharomyces cerevisiae (strain ATCC 204508 / S288c) (Baker's yeast).